The following is a 246-amino-acid chain: 2-aminoethylphosphonate cytidylyltransferase (246 aa).

6 residues coordinate CMP-(2-aminoethyl)phosphonate: Ala19, Gly20, Lys34, Ser97, Glu114, and Ala115. 2 residues coordinate Mg(2+): Asp116 and Asp145. 3 residues coordinate CMP-(2-aminoethyl)phosphonate: Asp145, Lys161, and Asp202. Mg(2+) contacts are provided by Glu226 and Asp228.

This sequence belongs to the LicC/PntC cytidylyltransferase family. As to quaternary structure, monomer. It depends on Mg(2+) as a cofactor.

It carries out the reaction (2-aminoethyl)phosphonate + CTP = CMP-(2-aminoethyl)phosphonate + diphosphate. The protein operates within phosphorus metabolism; phosphonate biosynthesis. Cytidylyltransferase involved in the biosynthesis of cell-surface phosphonates. Catalyzes the activation of 2-aminoethylphosphonate (AEP) to CMP-2-aminoethylphosphonate (CMP-AEP). Can also use phosphocholine, with much lower efficiency. Exhibits strong activity towards CTP, limited activity towards ATP and no activity with GTP. This Lancefieldella rimae (strain ATCC 49626 / DSM 7090 / CCUG 31168 / NBRC 15546 / VPI D140H-11A) (Atopobium rimae) protein is 2-aminoethylphosphonate cytidylyltransferase.